A 302-amino-acid polypeptide reads, in one-letter code: Phytoene synthase (302 aa).

This sequence belongs to the phytoene/squalene synthase family. ATP serves as cofactor. It depends on Mn(2+) as a cofactor. Requires Mg(2+) as cofactor.

It participates in carotenoid biosynthesis; phytoene biosynthesis. Involved in the biosynthesis of carotenoids. Catalyzes the condensation of two molecules of geranylgeranyl diphosphate (GGPP) to give prephytoene diphosphate (PPPP) and the subsequent rearrangement of the cyclopropylcarbinyl intermediate to yield phytoene. The chain is Phytoene synthase (crtB) from Mycobacterium bovis (strain ATCC BAA-935 / AF2122/97).